The chain runs to 151 residues: Large ribosomal subunit protein bL9 (151 aa).

The protein belongs to the bacterial ribosomal protein bL9 family.

Functionally, binds to the 23S rRNA. The chain is Large ribosomal subunit protein bL9 from Dehalococcoides mccartyi (strain ATCC BAA-2266 / KCTC 15142 / 195) (Dehalococcoides ethenogenes (strain 195)).